Consider the following 484-residue polypeptide: Sushi domain-containing protein 4 (484 aa).

An N-terminal signal peptide occupies residues 1–35; it reads MFHHADKGGKKSAFGHPVCGQIILSIILLRPPLLV. 4 Sushi domains span residues 46 to 110, 111 to 168, 169 to 230, and 232 to 295; these read QICK…VCLS, EDCL…QPTC, QGCL…RCLD, and EACS…YCVK. Intrachain disulfides connect cysteine 48/cysteine 90, cysteine 76/cysteine 108, cysteine 113/cysteine 156, cysteine 138/cysteine 168, cysteine 171/cysteine 215, cysteine 201/cysteine 228, cysteine 234/cysteine 280, and cysteine 265/cysteine 293. 2 N-linked (GlcNAc...) asparagine glycosylation sites follow: asparagine 95 and asparagine 125. An N-linked (GlcNAc...) asparagine glycan is attached at asparagine 183. A helical transmembrane segment spans residues 311–331; the sequence is WKVVACTATSVLLALLLVITA. Residues 374–484 form a disordered region; that stretch reads SGNYCQPPND…PLVEDGEEDC (111 aa). Polar residues-rich tracts occupy residues 424-442 and 449-467; these read DSLS…SSSH and SEKT…TSPS. Residues 470–484 show a composition bias toward acidic residues; sequence IADEIPLVEDGEEDC.

The protein localises to the membrane. The chain is Sushi domain-containing protein 4 (susd4) from Danio rerio (Zebrafish).